A 752-amino-acid polypeptide reads, in one-letter code: Cation-transporting P-type ATPase B (752 aa).

One can recognise an HMA domain in the interval 15–78; the sequence is RRIRLDVLGM…VVEKAGYHAA (64 aa). Positions 26 and 29 each coordinate a metal cation. 6 helical membrane passes run 105–125, 132–152, 167–187, 201–221, 361–381, and 390–410; these read LLVAAVLFVPLADLSTLFAIV, GWGYILTALAAPVVTWAAWPF, METLISVGIVAATAWSLSSVF, AILNSDSIYLEVAAGVTVFVL, IAGVFVPVVFVIAGLAGAAWL, and AFSVTLGVLVIACPCALGLAT. Asp-446 functions as the 4-aspartylphosphate intermediate in the catalytic mechanism. Helical transmembrane passes span 491 to 511 and 714 to 734; these read MAAAIVAASPDPGPVNGFVAV and AIPIAAAGLLNPLIAGAAMAF.

The protein belongs to the cation transport ATPase (P-type) (TC 3.A.3) family. Type IB subfamily.

The protein resides in the cell membrane. The catalysed reaction is ATP + H2O = ADP + phosphate + H(+). The chain is Cation-transporting P-type ATPase B (ctpB) from Mycobacterium tuberculosis (strain ATCC 25618 / H37Rv).